A 909-amino-acid polypeptide reads, in one-letter code: Cutinase transcription factor 1 alpha (909 aa).

Residues 1–51 (MSSGDAPPQAQPQPHQQEQPNQRQSSTPAPSAAPVPPAPSTSTSNSAGGVS) form a disordered region. The span at 12-30 (PQPHQQEQPNQRQSSTPAP) shows a compositional bias: low complexity. The zn(2)-C6 fungal-type DNA-binding region spans 61-90 (CETCHARKVRCDAASLGVPCTNCVAFQIEC). 3 disordered regions span residues 95–159 (PKRK…EAQA), 651–757 (AEGK…SFSV), and 841–878 (LPQG…QGQA). Residues 110–119 (KDSDSDRGDG) are compositionally biased toward basic and acidic residues. Residues 142–156 (VFHSHNGTPPTTLTE) are compositionally biased toward polar residues. Positions 669–683 (QHSRQQEAPKRKYDE) are enriched in basic and acidic residues. Polar residues-rich tracts occupy residues 704–717 (PQTP…TSSM), 737–755 (GGTN…NPSF), and 865–878 (SPDS…QGQA).

It localises to the nucleus. This is Cutinase transcription factor 1 alpha (CTF1-ALPHA) from Fusarium vanettenii (Neocosmospora pisi).